Reading from the N-terminus, the 30-residue chain is Ornithine carbamoyltransferase (30 aa).

Belongs to the aspartate/ornithine carbamoyltransferase superfamily. OTCase family.

It localises to the cytoplasm. The enzyme catalyses carbamoyl phosphate + L-ornithine = L-citrulline + phosphate + H(+). It functions in the pathway amino-acid biosynthesis; L-arginine biosynthesis; L-arginine from L-ornithine and carbamoyl phosphate: step 1/3. Has vitronectin and fibronectin-binding activity. This Staphylococcus epidermidis protein is Ornithine carbamoyltransferase (argF).